Consider the following 183-residue polypeptide: Protein Syd (183 aa).

It belongs to the Syd family.

The protein localises to the cell inner membrane. Its function is as follows. Interacts with the SecY protein in vivo. May bind preferentially to an uncomplexed state of SecY, thus functioning either as a chelating agent for excess SecY in the cell or as a regulatory factor that negatively controls the translocase function. This is Protein Syd from Yersinia pseudotuberculosis serotype O:1b (strain IP 31758).